A 64-amino-acid polypeptide reads, in one-letter code: Large ribosomal subunit protein uL29 (64 aa).

It belongs to the universal ribosomal protein uL29 family.

The sequence is that of Large ribosomal subunit protein uL29 from Burkholderia ambifaria (strain MC40-6).